A 325-amino-acid polypeptide reads, in one-letter code: Biotin synthase (325 aa).

The Radical SAM core domain occupies 49–278 (FNGNIVDLCS…KASIRLAGGR (230 aa)). Residues cysteine 67, cysteine 71, and cysteine 74 each coordinate [4Fe-4S] cluster. The [2Fe-2S] cluster site is built by serine 111, cysteine 143, cysteine 203, and arginine 273.

Belongs to the radical SAM superfamily. Biotin synthase family. Homodimer. [4Fe-4S] cluster is required as a cofactor. [2Fe-2S] cluster serves as cofactor.

The catalysed reaction is (4R,5S)-dethiobiotin + (sulfur carrier)-SH + 2 reduced [2Fe-2S]-[ferredoxin] + 2 S-adenosyl-L-methionine = (sulfur carrier)-H + biotin + 2 5'-deoxyadenosine + 2 L-methionine + 2 oxidized [2Fe-2S]-[ferredoxin]. The protein operates within cofactor biosynthesis; biotin biosynthesis; biotin from 7,8-diaminononanoate: step 2/2. Catalyzes the conversion of dethiobiotin (DTB) to biotin by the insertion of a sulfur atom into dethiobiotin via a radical-based mechanism. This is Biotin synthase from Clostridium tetani (strain Massachusetts / E88).